An 889-amino-acid polypeptide reads, in one-letter code: Alanine--tRNA ligase (889 aa).

Zn(2+)-binding residues include His-564, His-568, Cys-671, and His-675.

This sequence belongs to the class-II aminoacyl-tRNA synthetase family. Requires Zn(2+) as cofactor.

The protein resides in the cytoplasm. It carries out the reaction tRNA(Ala) + L-alanine + ATP = L-alanyl-tRNA(Ala) + AMP + diphosphate. Functionally, catalyzes the attachment of alanine to tRNA(Ala) in a two-step reaction: alanine is first activated by ATP to form Ala-AMP and then transferred to the acceptor end of tRNA(Ala). Also edits incorrectly charged Ser-tRNA(Ala) and Gly-tRNA(Ala) via its editing domain. This chain is Alanine--tRNA ligase, found in Pelagibacter ubique (strain HTCC1062).